The sequence spans 736 residues: Zinc finger CCCH domain-containing protein 14 (736 aa).

An N-acetylmethionine modification is found at methionine 1. Composition is skewed to polar residues over residues 77-103 and 131-145; these read TTEPSSLKSSDTNIFDSNVPSNKSNFS and VSTSSQESKTTNVRQ. The interval 77–145 is disordered; it reads TTEPSSLKSS…QESKTTNVRQ (69 aa). Serine 85 carries the phosphoserine modification. Glycyl lysine isopeptide (Lys-Gly) (interchain with G-Cter in SUMO2) cross-links involve residues lysine 99, lysine 139, lysine 175, and lysine 198. Position 240 is a phosphoserine (serine 240). Residue lysine 245 forms a Glycyl lysine isopeptide (Lys-Gly) (interchain with G-Cter in SUMO2) linkage. The residue at position 281 (serine 281) is a Phosphoserine. Glycyl lysine isopeptide (Lys-Gly) (interchain with G-Cter in SUMO2) cross-links involve residues lysine 283 and lysine 295. The tract at residues 310-350 is disordered; that stretch reads HDGEEEEEDDDYGSRTGSISSSVSVPAKPERRPSLPPSKQA. Phosphoserine occurs at positions 327 and 343. Residue lysine 357 is modified to N6-acetyllysine; alternate. A Glycyl lysine isopeptide (Lys-Gly) (interchain with G-Cter in SUMO2); alternate cross-link involves residue lysine 357. A Glycyl lysine isopeptide (Lys-Gly) (interchain with G-Cter in SUMO2) cross-link involves residue lysine 378. Phosphoserine is present on residues serine 390 and serine 409. The disordered stretch occupies residues 398–430; that stretch reads VVQGQSRTPRISPPIKEEETKGDSVEKNQGTQQ. Basic and acidic residues predominate over residues 412–423; the sequence is IKEEETKGDSVE. Lysine 413 is covalently cross-linked (Glycyl lysine isopeptide (Lys-Gly) (interchain with G-Cter in SUMO2)). Phosphoserine is present on serine 421. Lysine 489 is covalently cross-linked (Glycyl lysine isopeptide (Lys-Gly) (interchain with G-Cter in SUMO2)). Residues serine 498, serine 515, serine 527, and serine 620 each carry the phosphoserine modification. C3H1-type zinc fingers lie at residues 595-620, 621-640, 641-656, 682-699, and 701-719; these read EKLLERCKYWPACKNGDECAYHHPIS, PCKAFPNCKFAEKCLFVHPN, CKYDAKCTKPDCPFTH, CRYFPACKKMECPFYHPK, and CRFNTQCTRPDCTFYHPTI.

This sequence belongs to the ZC3H14 family. Homodimer; facilitating circular RNAs (circRNAs) formation. Associates with the spliceosome. Interacts with HOOK2. Interacts with ZFC3H1 in a RNase-sensitive manner. Expressed in fetal and adult brain. Expressed in fetal and adult temporal lobe.

It is found in the nucleus speckle. The protein localises to the cytoplasm. RNA-binding protein involved in the biogenesis of circular RNAs (circRNAs), which are produced by back-splicing circularization of pre-mRNAs. Acts by binding to both exon-intron boundary and 3'-UTR of pre-mRNAs to promote circRNA biogenesis through dimerization and the association with the spliceosome. Required for spermatogenesis via involvement in circRNA biogenesis. Regulates the pre-mRNA processing of ATP5MC1; preventing its degradation. Also binds the poly(A) tail of mRNAs; controlling poly(A) length in neuronal cells. In Homo sapiens (Human), this protein is Zinc finger CCCH domain-containing protein 14.